Here is an 81-residue protein sequence, read N- to C-terminus: uncharacterized protein (81 aa).

The signal sequence occupies residues Met-1 to Leu-20.

This is an uncharacterized protein from Treponema pallidum (strain Nichols).